A 146-amino-acid chain; its full sequence is Large ribosomal subunit protein uL15 (146 aa).

Positions 1–13 (MKLHELKPAEGSR) are enriched in basic and acidic residues. Residues 1–47 (MKLHELKPAEGSRKSRKRIGRGTGSGLGRNAGKGEKGQKARAGGGVR) form a disordered region. Gly residues predominate over residues 21–31 (RGTGSGLGRNA).

The protein belongs to the universal ribosomal protein uL15 family. Part of the 50S ribosomal subunit.

In terms of biological role, binds to the 23S rRNA. The polypeptide is Large ribosomal subunit protein uL15 (Clostridium kluyveri (strain NBRC 12016)).